The following is a 141-amino-acid chain: Large ribosomal subunit protein uL11 (141 aa).

The protein belongs to the universal ribosomal protein uL11 family. As to quaternary structure, part of the ribosomal stalk of the 50S ribosomal subunit. Interacts with L10 and the large rRNA to form the base of the stalk. L10 forms an elongated spine to which L12 dimers bind in a sequential fashion forming a multimeric L10(L12)X complex. One or more lysine residues are methylated.

Forms part of the ribosomal stalk which helps the ribosome interact with GTP-bound translation factors. In Parasynechococcus marenigrum (strain WH8102), this protein is Large ribosomal subunit protein uL11.